A 282-amino-acid chain; its full sequence is Bifunctional protein FolD (282 aa).

NADP(+)-binding positions include 165–167 (NRS), serine 190, and isoleucine 231.

The protein belongs to the tetrahydrofolate dehydrogenase/cyclohydrolase family. Homodimer.

It catalyses the reaction (6R)-5,10-methylene-5,6,7,8-tetrahydrofolate + NADP(+) = (6R)-5,10-methenyltetrahydrofolate + NADPH. The enzyme catalyses (6R)-5,10-methenyltetrahydrofolate + H2O = (6R)-10-formyltetrahydrofolate + H(+). It participates in one-carbon metabolism; tetrahydrofolate interconversion. Catalyzes the oxidation of 5,10-methylenetetrahydrofolate to 5,10-methenyltetrahydrofolate and then the hydrolysis of 5,10-methenyltetrahydrofolate to 10-formyltetrahydrofolate. The chain is Bifunctional protein FolD from Clostridium botulinum (strain 657 / Type Ba4).